A 93-amino-acid polypeptide reads, in one-letter code: uncharacterized protein (93 aa).

Residues Trp68–Ile88 traverse the membrane as a helical segment.

It is found in the membrane. This is an uncharacterized protein from Mycoplasma pneumoniae (strain ATCC 29342 / M129 / Subtype 1) (Mycoplasmoides pneumoniae).